A 329-amino-acid chain; its full sequence is Glycerol-3-phosphate dehydrogenase [NAD(P)+] (329 aa).

NADPH-binding residues include W11, R30, and K103. 3 residues coordinate sn-glycerol 3-phosphate: K103, G132, and S134. A136 contributes to the NADPH binding site. Sn-glycerol 3-phosphate is bound by residues K187, D240, S250, R251, and N252. K187 functions as the Proton acceptor in the catalytic mechanism. Residue R251 participates in NADPH binding. V275 and E277 together coordinate NADPH.

The protein belongs to the NAD-dependent glycerol-3-phosphate dehydrogenase family.

Its subcellular location is the cytoplasm. It carries out the reaction sn-glycerol 3-phosphate + NAD(+) = dihydroxyacetone phosphate + NADH + H(+). The catalysed reaction is sn-glycerol 3-phosphate + NADP(+) = dihydroxyacetone phosphate + NADPH + H(+). It functions in the pathway membrane lipid metabolism; glycerophospholipid metabolism. In terms of biological role, catalyzes the reduction of the glycolytic intermediate dihydroxyacetone phosphate (DHAP) to sn-glycerol 3-phosphate (G3P), the key precursor for phospholipid synthesis. The chain is Glycerol-3-phosphate dehydrogenase [NAD(P)+] from Nitrosomonas europaea (strain ATCC 19718 / CIP 103999 / KCTC 2705 / NBRC 14298).